We begin with the raw amino-acid sequence, 302 residues long: UDP-N-acetylenolpyruvoylglucosamine reductase (302 aa).

Residues 31–210 form the FAD-binding PCMH-type domain; the sequence is IGGQTKVYFR…ENEVLELKKK (180 aa). The active site involves R175. Catalysis depends on S224, which acts as the Proton donor. E297 is a catalytic residue.

Belongs to the MurB family. Requires FAD as cofactor.

It localises to the cytoplasm. The catalysed reaction is UDP-N-acetyl-alpha-D-muramate + NADP(+) = UDP-N-acetyl-3-O-(1-carboxyvinyl)-alpha-D-glucosamine + NADPH + H(+). It participates in cell wall biogenesis; peptidoglycan biosynthesis. Cell wall formation. In Pelagibacter ubique (strain HTCC1062), this protein is UDP-N-acetylenolpyruvoylglucosamine reductase.